The following is a 369-amino-acid chain: MSFGIDDLPVRDELRGKSPYGAPQLDVPVRLNTNENPYPLPEPLVERIAERVREAARHLNRYPDRDAVELRTELATYLTNTGKHPVGIENVWAANGSNEVIQQLLQTFGGPGRTAIGFEPSYSMHALIARGTGTAWISGPRGEDFTIDLAAARQAIAESRPDVVFITTPNNPTGTAVPPETVLALYEAAQAVKPSMVVVDEAYIEFSHGDSLLPLLEGRPHLVVSRTMSKAFGAAGLRLGYLAAHPAVVDAVQLVRLPYHLSAITQATALAALEHTDTLLGYVEQLKAERDRLVAELRAIGYDVTESDANFVQFGRFADAHEVWQQILDRGVLVRDNGVPGWLRVSAGTPEENDAFLDAVRELKKEQNA.

A disordered region spans residues 1-39; that stretch reads MSFGIDDLPVRDELRGKSPYGAPQLDVPVRLNTNENPYP. Lysine 230 carries the post-translational modification N6-(pyridoxal phosphate)lysine.

It belongs to the class-II pyridoxal-phosphate-dependent aminotransferase family. Histidinol-phosphate aminotransferase subfamily. In terms of assembly, homodimer. Pyridoxal 5'-phosphate is required as a cofactor.

The enzyme catalyses L-histidinol phosphate + 2-oxoglutarate = 3-(imidazol-4-yl)-2-oxopropyl phosphate + L-glutamate. Its pathway is amino-acid biosynthesis; L-histidine biosynthesis; L-histidine from 5-phospho-alpha-D-ribose 1-diphosphate: step 7/9. This is Histidinol-phosphate aminotransferase (hisC) from Streptomyces avermitilis (strain ATCC 31267 / DSM 46492 / JCM 5070 / NBRC 14893 / NCIMB 12804 / NRRL 8165 / MA-4680).